Here is a 143-residue protein sequence, read N- to C-terminus: Transcription antitermination protein NusB (143 aa).

Belongs to the NusB family.

Functionally, involved in transcription antitermination. Required for transcription of ribosomal RNA (rRNA) genes. Binds specifically to the boxA antiterminator sequence of the ribosomal RNA (rrn) operons. The protein is Transcription antitermination protein NusB of Anaeromyxobacter sp. (strain Fw109-5).